The sequence spans 460 residues: Argininosuccinate lyase (460 aa).

The protein belongs to the lyase 1 family. Argininosuccinate lyase subfamily.

The protein resides in the cytoplasm. It catalyses the reaction 2-(N(omega)-L-arginino)succinate = fumarate + L-arginine. Its pathway is amino-acid biosynthesis; L-arginine biosynthesis; L-arginine from L-ornithine and carbamoyl phosphate: step 3/3. The chain is Argininosuccinate lyase from Nitratidesulfovibrio vulgaris (strain ATCC 29579 / DSM 644 / CCUG 34227 / NCIMB 8303 / VKM B-1760 / Hildenborough) (Desulfovibrio vulgaris).